A 737-amino-acid chain; its full sequence is Cilium assembly protein DZIP1L (737 aa).

Residues Met-1–Gln-293 are interaction with Rab8. A coiled-coil region spans residues Val-98–Arg-132. The C2H2-type zinc finger occupies Tyr-144–His-167. Disordered regions lie at residues His-167–Lys-187, Glu-214–Leu-267, Ser-415–Ala-548, Lys-624–Asp-682, and Ile-698–Lys-737. Composition is skewed to basic and acidic residues over residues Glu-244–Gln-266 and Ser-415–Glu-438. Polar residues predominate over residues Ser-457–Lys-469. Acidic residues predominate over residues Ser-492–Thr-510. Over residues Ser-665–Arg-677 the composition is skewed to polar residues. A compositionally biased stretch (basic and acidic residues) spans Glu-724–Lys-737.

The protein belongs to the DZIP C2H2-type zinc-finger protein family. Component of a ciliary transition zone (TZ)-localized complex composed of DZIP1, Fam92 and Cby. Interacts directly with Cby. Interacts with Cep290 (via N-terminus). Interacts (via N-terminus) with Rab8. In terms of tissue distribution, in neurons of the second and third antennal segments, expressed at the tip of the dendrites.

The protein localises to the cytoplasm. The protein resides in the cytoskeleton. It localises to the microtubule organizing center. It is found in the centrosome. Its subcellular location is the centriole. The protein localises to the cilium basal body. Functionally, component of the DZIP1-Fam92-Cby complex which promotes ciliogenesis in sensory neurons and spermatocytes by acting downstream of Cep290 to initiate early ciliary membrane formation and thus transition zone (TZ) assembly. During spermatogenesis, also regulates distal elongation of the basal-body and their docking (anchoring) to the plasma membrane and as a consequence, regulates the initiation and proper elongation of axonemal microtubules. Within the complex, required to recruit or stabilize Rab8, Fam92 and Cby at the distal basal body of cilia to promote early ciliary membrane formation and initiate TZ assembly. Also acts with Fam92 to restrict Cep290 localization to the proximal part of the TZ. May also be involved in recruitment or stabilization of Mks1 at the TZ. The chain is Cilium assembly protein DZIP1L from Drosophila melanogaster (Fruit fly).